A 1958-amino-acid chain; its full sequence is Echinoderm microtubule-associated protein-like 6 (1958 aa).

WD repeat units follow at residues Gly59–Leu100, Val104–Ser145, Gly148–Lys187, Gly195–Gln233, Ala235–Asp273, Gly280–Gln321, His323–Arg362, Asn364–His403, Asp406–Gly445, and Gly561–Gly601. A disordered region spans residues Leu603–Val626. Residues Tyr615–Val626 are compositionally biased toward acidic residues. 10 WD repeats span residues Gly725 to Leu766, Gln770 to Thr811, Gly814 to Lys853, Gly861 to Lys900, Ala901 to Ala940, His996 to Ala1035, Lys1038 to Ser1077, His1080 to Ile1120, Ser1191 to Arg1230, and Gly1236 to Ser1276. Residues Lys1322–Pro1337 are compositionally biased toward basic and acidic residues. A disordered region spans residues Lys1322–Ile1353. WD repeat units follow at residues Glu1412–Met1456, Phe1460–Ser1501, Gly1504–Lys1543, Ala1553–Ala1591, Ala1593–Phe1638, His1685–Lys1724, Ser1726–Arg1767, Asp1768–Arg1807, Ala1880–Lys1919, and Gly1925–Leu1958.

It belongs to the WD repeat EMAP family.

It is found in the cytoplasm. The protein resides in the cytoskeleton. Functionally, may modify the assembly dynamics of microtubules, such that microtubules are slightly longer, but more dynamic. The polypeptide is Echinoderm microtubule-associated protein-like 6 (EML6) (Homo sapiens (Human)).